The following is a 60-amino-acid chain: Large ribosomal subunit protein bL32 (60 aa).

Positions 1 to 20 (MAVPKRKTSPSRRNMRRSHH) are enriched in basic residues. Residues 1-60 (MAVPKRKTSPSRRNMRRSHHALGANSFIEDKDTGELRRPHHVDLKTGMYNGKQILTPKED) form a disordered region. Residues 28-44 (IEDKDTGELRRPHHVDL) are compositionally biased toward basic and acidic residues.

The protein belongs to the bacterial ribosomal protein bL32 family.

This chain is Large ribosomal subunit protein bL32, found in Caulobacter vibrioides (strain ATCC 19089 / CIP 103742 / CB 15) (Caulobacter crescentus).